A 160-amino-acid polypeptide reads, in one-letter code: Transcriptional repressor NrdR (160 aa).

A zinc finger spans residues 3–34; sequence CPYCQYEDTQVKDSRPVEEGAVIRRRRVCPVC. Residues 49–139 form the ATP-cone domain; sequence LLVSKKSGRC…VYRDFRNASD (91 aa).

This sequence belongs to the NrdR family. The cofactor is Zn(2+).

Functionally, negatively regulates transcription of bacterial ribonucleotide reductase nrd genes and operons by binding to NrdR-boxes. This chain is Transcriptional repressor NrdR, found in Bartonella quintana (strain Toulouse) (Rochalimaea quintana).